We begin with the raw amino-acid sequence, 318 residues long: Aspartate carbamoyltransferase catalytic subunit (318 aa).

2 residues coordinate carbamoyl phosphate: Arg-58 and Thr-59. Position 86 (Lys-86) interacts with L-aspartate. Positions 108, 141, and 144 each coordinate carbamoyl phosphate. L-aspartate-binding residues include Arg-174 and Arg-226. Carbamoyl phosphate is bound by residues Gly-270 and Pro-271.

Belongs to the aspartate/ornithine carbamoyltransferase superfamily. ATCase family. As to quaternary structure, heterododecamer (2C3:3R2) of six catalytic PyrB chains organized as two trimers (C3), and six regulatory PyrI chains organized as three dimers (R2).

It carries out the reaction carbamoyl phosphate + L-aspartate = N-carbamoyl-L-aspartate + phosphate + H(+). It participates in pyrimidine metabolism; UMP biosynthesis via de novo pathway; (S)-dihydroorotate from bicarbonate: step 2/3. In terms of biological role, catalyzes the condensation of carbamoyl phosphate and aspartate to form carbamoyl aspartate and inorganic phosphate, the committed step in the de novo pyrimidine nucleotide biosynthesis pathway. The protein is Aspartate carbamoyltransferase catalytic subunit of Lactobacillus helveticus (strain DPC 4571).